We begin with the raw amino-acid sequence, 308 residues long: UPF0026 protein HP_0117 (308 aa).

The 231-residue stretch at 18–248 (FGKSLGVDLS…SLPKRSITQA (231 aa)) folds into the Radical SAM core domain. Cys33, Cys37, and Cys40 together coordinate [4Fe-4S] cluster.

It belongs to the UPF0026 family. Requires [4Fe-4S] cluster as cofactor.

The sequence is that of UPF0026 protein HP_0117 from Helicobacter pylori (strain ATCC 700392 / 26695) (Campylobacter pylori).